A 375-amino-acid polypeptide reads, in one-letter code: tRNA-specific 2-thiouridylase MnmA 3 (375 aa).

Residues Gly11–Ser18 and Met37 each bind ATP. Cys104 functions as the Nucleophile in the catalytic mechanism. A disulfide bridge connects residues Cys104 and Cys201. Gly128 is an ATP binding site. Residues Lys150–Gln152 are interaction with tRNA. Residue Cys201 is the Cysteine persulfide intermediate of the active site. The interval Arg309–Tyr310 is interaction with tRNA.

The protein belongs to the MnmA/TRMU family.

Its subcellular location is the cytoplasm. The enzyme catalyses S-sulfanyl-L-cysteinyl-[protein] + uridine(34) in tRNA + AH2 + ATP = 2-thiouridine(34) in tRNA + L-cysteinyl-[protein] + A + AMP + diphosphate + H(+). Its function is as follows. Catalyzes the 2-thiolation of uridine at the wobble position (U34) of tRNA, leading to the formation of s(2)U34. In Phocaeicola vulgatus (strain ATCC 8482 / DSM 1447 / JCM 5826 / CCUG 4940 / NBRC 14291 / NCTC 11154) (Bacteroides vulgatus), this protein is tRNA-specific 2-thiouridylase MnmA 3.